Here is a 178-residue protein sequence, read N- to C-terminus: Interleukin-10 (178 aa).

The first 18 residues, 1–18 (MPSSALLYCLILLAGVRP), serve as a signal peptide directing secretion. 2 disulfides stabilise this stretch: C30/C126 and C80/C132. Residue N134 is glycosylated (N-linked (GlcNAc...) asparagine).

This sequence belongs to the IL-10 family. In terms of assembly, homodimer. Interacts with IL10RA and IL10RB.

It is found in the secreted. Major immune regulatory cytokine that acts on many cells of the immune system where it has profound anti-inflammatory functions, limiting excessive tissue disruption caused by inflammation. Mechanistically, IL10 binds to its heterotetrameric receptor comprising IL10RA and IL10RB leading to JAK1 and STAT2-mediated phosphorylation of STAT3. In turn, STAT3 translocates to the nucleus where it drives expression of anti-inflammatory mediators. Targets antigen-presenting cells (APCs) such as macrophages and monocytes and inhibits their release of pro-inflammatory cytokines including granulocyte-macrophage colony-stimulating factor /GM-CSF, granulocyte colony-stimulating factor/G-CSF, IL-1 alpha, IL-1 beta, IL-6, IL-8 and TNF-alpha. Also interferes with antigen presentation by reducing the expression of MHC-class II and co-stimulatory molecules, thereby inhibiting their ability to induce T cell activation. In addition, controls the inflammatory response of macrophages by reprogramming essential metabolic pathways including mTOR signaling. This Meriones unguiculatus (Mongolian jird) protein is Interleukin-10 (IL10).